Consider the following 228-residue polypeptide: uncharacterized protein (228 aa).

This is an uncharacterized protein from Acidianus ambivalens (Desulfurolobus ambivalens).